Reading from the N-terminus, the 322-residue chain is Phosphatidylserine decarboxylase proenzyme (322 aa).

Residues Asp-90, His-147, and Ser-254 each act as charge relay system; for autoendoproteolytic cleavage activity in the active site. Catalysis depends on Ser-254, which acts as the Schiff-base intermediate with substrate; via pyruvic acid; for decarboxylase activity. Position 254 is a pyruvic acid (Ser); by autocatalysis (Ser-254). Positions 293–322 (PDAEPAPLPAEEIEAEHDASPLVDDKKDQV) are disordered. Basic and acidic residues predominate over residues 308-322 (EHDASPLVDDKKDQV).

It belongs to the phosphatidylserine decarboxylase family. PSD-B subfamily. Prokaryotic type I sub-subfamily. Heterodimer of a large membrane-associated beta subunit and a small pyruvoyl-containing alpha subunit. Requires pyruvate as cofactor. In terms of processing, is synthesized initially as an inactive proenzyme. Formation of the active enzyme involves a self-maturation process in which the active site pyruvoyl group is generated from an internal serine residue via an autocatalytic post-translational modification. Two non-identical subunits are generated from the proenzyme in this reaction, and the pyruvate is formed at the N-terminus of the alpha chain, which is derived from the carboxyl end of the proenzyme. The autoendoproteolytic cleavage occurs by a canonical serine protease mechanism, in which the side chain hydroxyl group of the serine supplies its oxygen atom to form the C-terminus of the beta chain, while the remainder of the serine residue undergoes an oxidative deamination to produce ammonia and the pyruvoyl prosthetic group on the alpha chain. During this reaction, the Ser that is part of the protease active site of the proenzyme becomes the pyruvoyl prosthetic group, which constitutes an essential element of the active site of the mature decarboxylase.

The protein localises to the cell membrane. It catalyses the reaction a 1,2-diacyl-sn-glycero-3-phospho-L-serine + H(+) = a 1,2-diacyl-sn-glycero-3-phosphoethanolamine + CO2. The protein operates within phospholipid metabolism; phosphatidylethanolamine biosynthesis; phosphatidylethanolamine from CDP-diacylglycerol: step 2/2. Catalyzes the formation of phosphatidylethanolamine (PtdEtn) from phosphatidylserine (PtdSer). In Escherichia coli O139:H28 (strain E24377A / ETEC), this protein is Phosphatidylserine decarboxylase proenzyme.